Here is a 366-residue protein sequence, read N- to C-terminus: 3-isopropylmalate dehydrogenase (366 aa).

76 to 89 (GPKWDANPSHLRPE) contacts NAD(+). Arg-96, Arg-106, Arg-134, and Asp-219 together coordinate substrate. Positions 219, 243, and 247 each coordinate Mg(2+). An NAD(+)-binding site is contributed by 277–289 (GSAPDIAGKGIAN).

This sequence belongs to the isocitrate and isopropylmalate dehydrogenases family. LeuB type 1 subfamily. Homodimer. The cofactor is Mg(2+). Mn(2+) serves as cofactor.

It is found in the cytoplasm. It carries out the reaction (2R,3S)-3-isopropylmalate + NAD(+) = 4-methyl-2-oxopentanoate + CO2 + NADH. It functions in the pathway amino-acid biosynthesis; L-leucine biosynthesis; L-leucine from 3-methyl-2-oxobutanoate: step 3/4. In terms of biological role, catalyzes the oxidation of 3-carboxy-2-hydroxy-4-methylpentanoate (3-isopropylmalate) to 3-carboxy-4-methyl-2-oxopentanoate. The product decarboxylates to 4-methyl-2 oxopentanoate. The sequence is that of 3-isopropylmalate dehydrogenase from Oceanobacillus iheyensis (strain DSM 14371 / CIP 107618 / JCM 11309 / KCTC 3954 / HTE831).